We begin with the raw amino-acid sequence, 382 residues long: MSSSNLFKPIPLGRKVLQHKVVLSPMTRFRADNDGVPLSYVKSYYGQRASIRGTLLITEAVAICPRAKGFSNCPGIWHQDQIAAWKEVVDEVHSKGSVIWLQLWATGRASDADTLKESGFHLESSSDVPVAPGEPVPRPLSEDEIESYIRDYVTGAINAVQGAGFDGIEIHGANGFLVDQFLQASCNTRADQWGGSIENRSRFGLEITRRVVDAVGKDRVGVKLSPWSTFQGMGTMDDLVAQFEHFISRLREMDIAYIHLVNTRWLEEEEPGIKTHPDVDNQTFVRMWGNKTPILLAGGYDADSARRLVDETYSDQNNIMVVFGRHYISNPDLPFRLRLGIPLQKYNRDTFYIPFSDEGYLDYPFCQEFLDQQDVDQVVVAA.

Residues 25 to 27 (PMT), Ala-60, Gln-102, and His-171 contribute to the FMN site. Substrate contacts are provided by His-171 and Asn-174. FMN is bound by residues Lys-223, Gly-299, 324-325 (GR), and Arg-325. Tyr-352 is a binding site for substrate.

The protein belongs to the NADH:flavin oxidoreductase/NADH oxidase family.

Its function is as follows. Probable inactive dehydrogenase; part of the gene cluster that mediates the biosynthesis of fungal ergot alkaloid. DmaW catalyzes the first step of ergot alkaloid biosynthesis by condensing dimethylallyl diphosphate (DMAP) and tryptophan to form 4-dimethylallyl-L-tryptophan. The second step is catalyzed by the methyltransferase easF that methylates 4-dimethylallyl-L-tryptophan in the presence of S-adenosyl-L-methionine, resulting in the formation of 4-dimethylallyl-L-abrine. The catalase easC and the FAD-dependent oxidoreductase easE then transform 4-dimethylallyl-L-abrine to chanoclavine-I which is further oxidized by easD in the presence of NAD(+), resulting in the formation of chanoclavine-I aldehyde. Agroclavine dehydrogenase easG then mediates the conversion of chanoclavine-I aldehyde to agroclavine via a non-enzymatic adduct reaction: the substrate is an iminium intermediate that is formed spontaneously from chanoclavine-I aldehyde in the presence of glutathione. Further conversion of agroclavine to paspalic acid is a two-step process involving oxidation of agroclavine to elymoclavine and of elymoclavine to paspalic acid, the second step being performed by the elymoclavine oxidase cloA. However, cloA does not encode a functional enzyme indicating that C.fusiformis terminates its ergot alkaloid pathway at elymoclavine. The polypeptide is Probable inactive dehydrogenase easA (Claviceps fusiformis (Ergot fungus)).